The following is a 469-amino-acid chain: UDP-N-acetylmuramate--L-alanine ligase (469 aa).

119–125 (GTHGKTT) lines the ATP pocket.

The protein belongs to the MurCDEF family.

Its subcellular location is the cytoplasm. The catalysed reaction is UDP-N-acetyl-alpha-D-muramate + L-alanine + ATP = UDP-N-acetyl-alpha-D-muramoyl-L-alanine + ADP + phosphate + H(+). Its pathway is cell wall biogenesis; peptidoglycan biosynthesis. Cell wall formation. This is UDP-N-acetylmuramate--L-alanine ligase from Vesicomyosocius okutanii subsp. Calyptogena okutanii (strain HA).